The following is a 432-amino-acid chain: Glutamate-1-semialdehyde 2,1-aminomutase 1 (432 aa).

Residue lysine 268 is modified to N6-(pyridoxal phosphate)lysine.

This sequence belongs to the class-III pyridoxal-phosphate-dependent aminotransferase family. HemL subfamily. Homodimer. It depends on pyridoxal 5'-phosphate as a cofactor.

Its subcellular location is the cytoplasm. It carries out the reaction (S)-4-amino-5-oxopentanoate = 5-aminolevulinate. The protein operates within porphyrin-containing compound metabolism; protoporphyrin-IX biosynthesis; 5-aminolevulinate from L-glutamyl-tRNA(Glu): step 2/2. The sequence is that of Glutamate-1-semialdehyde 2,1-aminomutase 1 from Bacillus mycoides (strain KBAB4) (Bacillus weihenstephanensis).